Consider the following 471-residue polypeptide: Trigger factor (471 aa).

Positions 174–261 (GDVAVVSFEG…VKDLKTRELP (88 aa)) constitute a PPIase FKBP-type domain. A compositionally biased stretch (polar residues) spans 436 to 446 (ETLPKTKSLNG). The interval 436–471 (ETLPKTKSLNGKPSTQGKTSQSKSKKTKTKVEKTTK) is disordered. Low complexity predominate over residues 447-457 (KPSTQGKTSQS).

It belongs to the FKBP-type PPIase family. Tig subfamily.

It localises to the cytoplasm. It catalyses the reaction [protein]-peptidylproline (omega=180) = [protein]-peptidylproline (omega=0). Involved in protein export. Acts as a chaperone by maintaining the newly synthesized protein in an open conformation. Functions as a peptidyl-prolyl cis-trans isomerase. The polypeptide is Trigger factor (Prochlorococcus marinus (strain MIT 9211)).